The following is a 226-amino-acid chain: Putative N-acetylmannosamine-6-phosphate 2-epimerase 1 (226 aa).

This sequence belongs to the NanE family.

It carries out the reaction an N-acyl-D-glucosamine 6-phosphate = an N-acyl-D-mannosamine 6-phosphate. It functions in the pathway amino-sugar metabolism; N-acetylneuraminate degradation; D-fructose 6-phosphate from N-acetylneuraminate: step 3/5. Functionally, converts N-acetylmannosamine-6-phosphate (ManNAc-6-P) to N-acetylglucosamine-6-phosphate (GlcNAc-6-P). The sequence is that of Putative N-acetylmannosamine-6-phosphate 2-epimerase 1 (nanE1) from Salmonella typhimurium (strain LT2 / SGSC1412 / ATCC 700720).